We begin with the raw amino-acid sequence, 313 residues long: Proline iminopeptidase (313 aa).

One can recognise an AB hydrolase-1 domain in the interval 35–298; it reads KPVVILHGGP…TPGAGHSAFE (264 aa). The Nucleophile role is filled by S110. D266 is an active-site residue. The Proton donor role is filled by H294.

This sequence belongs to the peptidase S33 family.

The protein localises to the cytoplasm. The enzyme catalyses Release of N-terminal proline from a peptide.. Functionally, specifically catalyzes the removal of N-terminal proline residues from peptides. This Xylella fastidiosa (strain Temecula1 / ATCC 700964) protein is Proline iminopeptidase (pip).